Here is a 689-residue protein sequence, read N- to C-terminus: Protein asunder (689 aa).

Residues 521 to 550 adopt a coiled-coil conformation; sequence NGARLKLSKAKDQYRLLYRELEQLIQLNAT. Disordered stretches follow at residues 578–619 and 662–689; these read GASL…SKRR and PDFGNKDKDTVASGASITPNVKEESVRS. The segment covering 599–614 has biased composition (low complexity); it reads SSGSASGSSNSNSLLK. A Nuclear localization signal (NLS) motif is present at residues 613 to 619; the sequence is LKASKRR.

It belongs to the Integrator subunit 13 family. In terms of assembly, belongs to the multiprotein complex Integrator, at least composed of IntS1, IntS2, IntS3, IntS4, omd/IntS5, IntS6, defl/IntS7, IntS8, IntS9, IntS10, IntS11, IntS12, asun/IntS13, IntS14 and IntS15. The core complex associates with protein phosphatase 2A subunits mts/PP2A and Pp2A-29B, to form the Integrator-PP2A (INTAC) complex. Phosphorylated.

It localises to the nucleus. It is found in the cytoplasm. Its subcellular location is the perinuclear region. Functionally, component of the integrator complex, a multiprotein complex that terminates RNA polymerase II (Pol II) transcription in the promoter-proximal region of genes. The integrator complex provides a quality checkpoint during transcription elongation by driving premature transcription termination of transcripts that are unfavorably configured for transcriptional elongation: the complex terminates transcription by (1) catalyzing dephosphorylation of the C-terminal domain (CTD) of Pol II subunit Polr2A/Rbp1 and Spt5, and (2) degrading the exiting nascent RNA transcript via endonuclease activity. The integrator complex is also involved in the 3'-end processing of the U7 snRNA, and also the spliceosomal snRNAs U1, U2, U4 and U5. The chain is Protein asunder (asun) from Drosophila yakuba (Fruit fly).